The chain runs to 110 residues: Large ribosomal subunit protein uL22 (110 aa).

Belongs to the universal ribosomal protein uL22 family. In terms of assembly, part of the 50S ribosomal subunit.

In terms of biological role, this protein binds specifically to 23S rRNA; its binding is stimulated by other ribosomal proteins, e.g. L4, L17, and L20. It is important during the early stages of 50S assembly. It makes multiple contacts with different domains of the 23S rRNA in the assembled 50S subunit and ribosome. Functionally, the globular domain of the protein is located near the polypeptide exit tunnel on the outside of the subunit, while an extended beta-hairpin is found that lines the wall of the exit tunnel in the center of the 70S ribosome. This chain is Large ribosomal subunit protein uL22, found in Enterobacter sp. (strain 638).